Here is a 1705-residue protein sequence, read N- to C-terminus: Homeobox-DDT domain protein RLT1 (1705 aa).

Disordered stretches follow at residues Met-1 to Thr-53, Glu-118 to Thr-167, His-237 to Met-267, Gly-296 to Pro-322, and Gly-352 to Glu-414. Positions Val-39–Gly-98 form a DNA-binding region, homeobox. The span at Gly-136 to Arg-159 shows a compositional bias: low complexity. Polar residues-rich tracts occupy residues Glu-253–Pro-265 and Arg-310–Met-319. The 60-residue stretch at Asp-549–Asp-608 folds into the DDT domain. One can recognise an HTH HARE-type domain in the interval Gly-731–Pro-800. 5 disordered regions span residues Thr-1028–Asn-1053, Val-1198–Val-1229, Pro-1441–Ser-1502, Pro-1561–Tyr-1635, and Ala-1652–Ser-1705. The span at Ser-1201–Ser-1220 shows a compositional bias: low complexity. The segment covering Ser-1455–Gln-1465 has biased composition (basic and acidic residues). Acidic residues-rich tracts occupy residues Glu-1565–Glu-1574, Val-1611–Gly-1628, and Gly-1669–Val-1684.

As to quaternary structure, interacts with CHR11 and CHR17. Interacts (via the DDT domain) with CHR11 (via C-terminus). Highly expressed in growing tissues such as inflorescence and flower meristems, young leaves and floral organs. Expressed in roots, rosette and cauline leaves, stems, flowers, inflorescences and siliques.

It is found in the nucleus. Transcriptional regulator required for the maintenance of the plant vegetative phase. In association with CHR11 or CHR17 may prevent the early activation of the vegetative-to-reproductive transition by regulating key genes that contribute to flower timing, such as FT, SEP1, SEP3, AGL8/FUL, SOC1 and FLC. The chain is Homeobox-DDT domain protein RLT1 from Arabidopsis thaliana (Mouse-ear cress).